Here is a 680-residue protein sequence, read N- to C-terminus: NADPH--cytochrome P450 reductase (680 aa).

The Lumenal portion of the chain corresponds to 1–5 (MALDK). Residues 6 to 23 (LDLYVIITLVVAIAAYFA) traverse the membrane as a helical segment. Topologically, residues 24–680 (KNQFLDQQQD…VQNRYQEDVW (657 aa)) are cytoplasmic. The Flavodoxin-like domain occupies 60 to 204 (TLLLFGSQTG…DFLAWKDNVF (145 aa)). Residues 66–71 (SQTGTA), 117–120 (ATYG), 152–161 (LGNSTYEFFN), and aspartate 187 each bind FMN. In terms of domain architecture, FAD-binding FR-type spans 264–509 (THPFLARIVK…NGPRGKFSKF (246 aa)). NADP(+) is bound at residue arginine 283. FAD is bound by residues 439–442 (RYYS), 457–459 (TAV), and 473–476 (GVVT). NADP(+) contacts are provided by residues threonine 537, 599 to 600 (SR), 606 to 610 (KVYVQ), and aspartate 642. Tryptophan 680 lines the FAD pocket.

The protein belongs to the NADPH--cytochrome P450 reductase family. This sequence in the N-terminal section; belongs to the flavodoxin family. It in the C-terminal section; belongs to the flavoprotein pyridine nucleotide cytochrome reductase family. FAD is required as a cofactor. FMN serves as cofactor.

It is found in the endoplasmic reticulum membrane. The protein resides in the mitochondrion outer membrane. It localises to the cell membrane. It carries out the reaction 2 oxidized [cytochrome P450] + NADPH = 2 reduced [cytochrome P450] + NADP(+) + H(+). Its function is as follows. This enzyme is required for electron transfer from NADP to cytochrome P450 in microsomes. It can also provide electron transfer to heme oxygenase and cytochrome B5. Involved in ergosterol biosynthesis. The sequence is that of NADPH--cytochrome P450 reductase from Candida tropicalis (Yeast).